Reading from the N-terminus, the 561-residue chain is MSNSSFNRQWAKVILETLTRHGLRHICIAPGSRSTPLTLAAAANHKLICHTHFDERGLGHLALGLAKATQQPVAVIVTSGTAVANLYPALIEAGLTGERVIFLTADRPPELINCGANQAIRQQGIFASHPSETLSLPRPTADISARWLVSTLDNAMNNLVHGALHVNCPFAEPLYGDDIEHDTPWTQALGKWWQSDKPWLQETLSPSVTTHPQWDRLRQKKGVVIAGRISAKEGIAVAKWASKLGWPLLGDVLSQTGQPLPCADLWLNNPQVKAELNQAEIVIQFGSSLTGKRLLQWQANCSPQMYWVIDAIPGRLDPGHHQGEKFTLSPSQWLTAHPAIDNLPWALSLSHIATQTYQHVTEVTDYFGEAQVAHQLDHLLPHNGQLFVGNSLIVRLIDAFAQLPQGYPVMSNRGASGIDGLLSTSAGVHRATQKPTLTILGDLSALYDLNSLALHQQVYAPNVVIIVNNNGGQIFSMLPTPMAERERFYCMPHALNFKHAAAMFGLDYVAPNCWDDLFTTVTACWQGEAKTTLIELIVNETEGAETLNQLVKQVTAYDFSL.

It belongs to the TPP enzyme family. MenD subfamily. Homodimer. Requires Mg(2+) as cofactor. It depends on Mn(2+) as a cofactor. The cofactor is thiamine diphosphate.

The catalysed reaction is isochorismate + 2-oxoglutarate + H(+) = 5-enolpyruvoyl-6-hydroxy-2-succinyl-cyclohex-3-ene-1-carboxylate + CO2. It functions in the pathway quinol/quinone metabolism; 1,4-dihydroxy-2-naphthoate biosynthesis; 1,4-dihydroxy-2-naphthoate from chorismate: step 2/7. The protein operates within quinol/quinone metabolism; menaquinone biosynthesis. In terms of biological role, catalyzes the thiamine diphosphate-dependent decarboxylation of 2-oxoglutarate and the subsequent addition of the resulting succinic semialdehyde-thiamine pyrophosphate anion to isochorismate to yield 2-succinyl-5-enolpyruvyl-6-hydroxy-3-cyclohexene-1-carboxylate (SEPHCHC). The polypeptide is 2-succinyl-5-enolpyruvyl-6-hydroxy-3-cyclohexene-1-carboxylate synthase (Proteus mirabilis (strain HI4320)).